The following is a 311-amino-acid chain: ATP synthase subunit a (311 aa).

The next 6 membrane-spanning stretches (helical) occupy residues 62-82, 123-143, 179-199, 213-233, 253-273, and 276-296; these read AVHV…GFFM, VAPM…MDLI, VTVF…WGFI, FWYF…VALI, IFIL…LGGI, and FGWA…FMVL.

The protein belongs to the ATPase A chain family. F-type ATPases have 2 components, CF(1) - the catalytic core - and CF(0) - the membrane proton channel. CF(1) has five subunits: alpha(3), beta(3), gamma(1), delta(1), epsilon(1). CF(0) has three main subunits: a(1), b(2) and c(9-12). The alpha and beta chains form an alternating ring which encloses part of the gamma chain. CF(1) is attached to CF(0) by a central stalk formed by the gamma and epsilon chains, while a peripheral stalk is formed by the delta and b chains.

Its subcellular location is the cell inner membrane. Functionally, key component of the proton channel; it plays a direct role in the translocation of protons across the membrane. The polypeptide is ATP synthase subunit a (Teredinibacter turnerae (strain ATCC 39867 / T7901)).